A 268-amino-acid polypeptide reads, in one-letter code: tRNA pseudouridine synthase A (268 aa).

The Nucleophile role is filled by aspartate 52. Position 113 (tyrosine 113) interacts with substrate.

Belongs to the tRNA pseudouridine synthase TruA family. As to quaternary structure, homodimer.

The enzyme catalyses uridine(38/39/40) in tRNA = pseudouridine(38/39/40) in tRNA. Its function is as follows. Formation of pseudouridine at positions 38, 39 and 40 in the anticodon stem and loop of transfer RNAs. The polypeptide is tRNA pseudouridine synthase A (Chlamydia abortus (strain DSM 27085 / S26/3) (Chlamydophila abortus)).